The primary structure comprises 606 residues: EPM2A-interacting protein 1 (606 aa).

Ser-147 carries the phosphoserine modification.

Interacts with EPM2A.

It localises to the endoplasmic reticulum. The sequence is that of EPM2A-interacting protein 1 (Epm2aip1) from Mus musculus (Mouse).